Reading from the N-terminus, the 276-residue chain is Shikimate dehydrogenase (NADP(+)) (276 aa).

Shikimate is bound by residues 15–17 (SMS) and threonine 63. Catalysis depends on lysine 67, which acts as the Proton acceptor. An NADP(+)-binding site is contributed by aspartate 79. Shikimate-binding residues include asparagine 88 and aspartate 103. Residues 130 to 134 (GAGGA), 154 to 159 (NRTLSR), and isoleucine 217 each bind NADP(+). Position 219 (tyrosine 219) interacts with shikimate. Glycine 240 serves as a coordination point for NADP(+).

Belongs to the shikimate dehydrogenase family. In terms of assembly, homodimer.

The enzyme catalyses shikimate + NADP(+) = 3-dehydroshikimate + NADPH + H(+). Its pathway is metabolic intermediate biosynthesis; chorismate biosynthesis; chorismate from D-erythrose 4-phosphate and phosphoenolpyruvate: step 4/7. In terms of biological role, involved in the biosynthesis of the chorismate, which leads to the biosynthesis of aromatic amino acids. Catalyzes the reversible NADPH linked reduction of 3-dehydroshikimate (DHSA) to yield shikimate (SA). The protein is Shikimate dehydrogenase (NADP(+)) of Oceanobacillus iheyensis (strain DSM 14371 / CIP 107618 / JCM 11309 / KCTC 3954 / HTE831).